The chain runs to 266 residues: GTP cyclohydrolase FolE2 (266 aa).

The protein belongs to the GTP cyclohydrolase IV family.

It catalyses the reaction GTP + H2O = 7,8-dihydroneopterin 3'-triphosphate + formate + H(+). It participates in cofactor biosynthesis; 7,8-dihydroneopterin triphosphate biosynthesis; 7,8-dihydroneopterin triphosphate from GTP: step 1/1. Its function is as follows. Converts GTP to 7,8-dihydroneopterin triphosphate. The chain is GTP cyclohydrolase FolE2 from Burkholderia mallei (strain ATCC 23344).